The following is a 47-amino-acid chain: Large ribosomal subunit protein eL40 (47 aa).

This sequence belongs to the eukaryotic ribosomal protein eL40 family.

This Methanococcus aeolicus (strain ATCC BAA-1280 / DSM 17508 / OCM 812 / Nankai-3) protein is Large ribosomal subunit protein eL40.